The sequence spans 134 residues: Small ribosomal subunit protein uS8c (134 aa).

The protein belongs to the universal ribosomal protein uS8 family. As to quaternary structure, part of the 30S ribosomal subunit.

The protein resides in the plastid. The protein localises to the chloroplast. Functionally, one of the primary rRNA binding proteins, it binds directly to 16S rRNA central domain where it helps coordinate assembly of the platform of the 30S subunit. The protein is Small ribosomal subunit protein uS8c (rps8) of Nicotiana tabacum (Common tobacco).